The following is a 73-amino-acid chain: Methionyl-tRNA formyltransferase (73 aa).

The protein belongs to the Fmt family.

It carries out the reaction L-methionyl-tRNA(fMet) + (6R)-10-formyltetrahydrofolate = N-formyl-L-methionyl-tRNA(fMet) + (6S)-5,6,7,8-tetrahydrofolate + H(+). Functionally, attaches a formyl group to the free amino group of methionyl-tRNA(fMet). The formyl group appears to play a dual role in the initiator identity of N-formylmethionyl-tRNA by promoting its recognition by IF2 and preventing the misappropriation of this tRNA by the elongation apparatus. The sequence is that of Methionyl-tRNA formyltransferase (fmt) from Rickettsia amblyommatis (Rickettsia amblyommii).